Consider the following 518-residue polypeptide: uncharacterized protein (518 aa).

The N-terminal stretch at 1-21 (MWKWKVILLFLAEMFVSGVNG) is a signal peptide. N-linked (GlcNAc...) asparagine glycans are attached at residues Asn-30, Asn-142, Asn-295, Asn-342, Asn-362, Asn-410, and Asn-503. One can recognise a CUB domain in the interval 389–517 (CPPFGITNSV…RGFWVSITPQ (129 aa)).

Its subcellular location is the secreted. This is an uncharacterized protein from Caenorhabditis elegans.